We begin with the raw amino-acid sequence, 501 residues long: Glycerol kinase (501 aa).

Threonine 12 contacts ADP. The ATP site is built by threonine 12, threonine 13, and serine 14. Position 12 (threonine 12) interacts with sn-glycerol 3-phosphate. ADP is bound at residue arginine 16. Sn-glycerol 3-phosphate-binding residues include arginine 82, glutamate 83, tyrosine 135, and aspartate 244. Glycerol is bound by residues arginine 82, glutamate 83, tyrosine 135, aspartate 244, and glutamine 245. Positions 266, 309, 409, and 413 each coordinate ADP. ATP-binding residues include threonine 266, glycine 309, and glycine 409.

The protein belongs to the FGGY kinase family.

It carries out the reaction glycerol + ATP = sn-glycerol 3-phosphate + ADP + H(+). It functions in the pathway polyol metabolism; glycerol degradation via glycerol kinase pathway; sn-glycerol 3-phosphate from glycerol: step 1/1. With respect to regulation, inhibited by fructose 1,6-bisphosphate (FBP). In terms of biological role, key enzyme in the regulation of glycerol uptake and metabolism. Catalyzes the phosphorylation of glycerol to yield sn-glycerol 3-phosphate. This chain is Glycerol kinase, found in Coxiella burnetii (strain Dugway 5J108-111).